Reading from the N-terminus, the 1465-residue chain is DNA polymerase III PolC-type (1465 aa).

Positions 431–583 (DVETTGLSAM…YDAEATGRLL (153 aa)) constitute an Exonuclease domain.

Belongs to the DNA polymerase type-C family. PolC subfamily.

It localises to the cytoplasm. The enzyme catalyses DNA(n) + a 2'-deoxyribonucleoside 5'-triphosphate = DNA(n+1) + diphosphate. In terms of biological role, required for replicative DNA synthesis. This DNA polymerase also exhibits 3' to 5' exonuclease activity. The chain is DNA polymerase III PolC-type from Streptococcus pyogenes.